The primary structure comprises 274 residues: MSGKKWDEEEEESSAPNSPVLAPGRRRFDDEEGNESDVLDSWDAAEDSEVEREKAKKAAEAKAKAEAEAAANKKSKAQRIAERQAERARQLAEDSDAEEETEAERRERLRREQKESDLKHAEDLFAGIGISNDRKVVSKGTIVQIDPKDPNNTIDISTLALFNPTTKTQFETLRTTLGPMIGKLSPKPHYTLFLQEFSKQLAKDLKSDEIKKIASTLTALSNEKLKEEKAAEKGGKKSKAAKTKTSLAGVGRGGAIAEAHDTYDDDAFGDDDFM.

2 disordered regions span residues M1 to H120 and E227 to S246. Acidic residues predominate over residues D30–V50. A coiled-coil region spans residues E46 to E112. Composition is skewed to basic and acidic residues over residues E51–A67 and R79–A92. The span at E93–E102 shows a compositional bias: acidic residues. Residues A103–H120 are compositionally biased toward basic and acidic residues.

This sequence belongs to the eIF-3 subunit J family. As to quaternary structure, component of the eukaryotic translation initiation factor 3 (eIF-3) complex.

It localises to the cytoplasm. Component of the eukaryotic translation initiation factor 3 (eIF-3) complex, which is involved in protein synthesis of a specialized repertoire of mRNAs and, together with other initiation factors, stimulates binding of mRNA and methionyl-tRNAi to the 40S ribosome. The eIF-3 complex specifically targets and initiates translation of a subset of mRNAs involved in cell proliferation. The polypeptide is Eukaryotic translation initiation factor 3 subunit J (hcr-1) (Neurospora crassa (strain ATCC 24698 / 74-OR23-1A / CBS 708.71 / DSM 1257 / FGSC 987)).